A 312-amino-acid polypeptide reads, in one-letter code: D-alanine--D-alanine ligase (312 aa).

Positions 103–303 (KQQLVPHGIR…YADLVQAIVD (201 aa)) constitute an ATP-grasp domain. 130 to 186 (MPRPYVLKPVNEGSSVGVAIIKERDNHGVPIHRDSHGPWQTFATLLAEPFIRGRELT) lines the ATP pocket. Aspartate 254, glutamate 270, and asparagine 272 together coordinate Mg(2+).

This sequence belongs to the D-alanine--D-alanine ligase family. Requires Mg(2+) as cofactor. The cofactor is Mn(2+).

The protein localises to the cytoplasm. It catalyses the reaction 2 D-alanine + ATP = D-alanyl-D-alanine + ADP + phosphate + H(+). It participates in cell wall biogenesis; peptidoglycan biosynthesis. In terms of biological role, cell wall formation. The polypeptide is D-alanine--D-alanine ligase (Rhizorhabdus wittichii (strain DSM 6014 / CCUG 31198 / JCM 15750 / NBRC 105917 / EY 4224 / RW1) (Sphingomonas wittichii)).